A 387-amino-acid polypeptide reads, in one-letter code: MLQRIYLDNNATTRIDPKVKEIMDPFLRDHYGNPSSLHQFGTETHPAIAEALDKLYKGINARDIDDVIITSCATESNNWVLKGVYFDECLKKGKNHIVTTVAEHPAVRSTCNFLESLGVEVTYLPINEHGSITAEQVKEAITEKTALVSVMWANNETGLIFPIEEIGAICKEKGVLFHTDAVQAIGKIPVDVLKANADFLSFSAHKFHGPKGIGGLYIRSGVGLTPLFHGGEHMNGRRSGTLNVPYIVGMGEAMKLAVEHLDYEKEVVGKLRDKLEEALLKIPDVMVVGDRIHRVPNTTLVSVRGIEGEAMLWDLNRSNIAASTGSACASEDLEANPVMVAIGASKELAHTAIRLSLSRFNTEAEIDKTIEVFSQAAIRLRNISSSY.

Pyridoxal 5'-phosphate contacts are provided by residues 73–74 (AT), N155, Q183, and 203–205 (SAH). K206 is subject to N6-(pyridoxal phosphate)lysine. Position 241 (T241) interacts with pyridoxal 5'-phosphate. C328 (cysteine persulfide intermediate) is an active-site residue. C328 is a binding site for [2Fe-2S] cluster.

This sequence belongs to the class-V pyridoxal-phosphate-dependent aminotransferase family. NifS/IscS subfamily. As to quaternary structure, homodimer. Forms a heterotetramer with IscU, interacts with other sulfur acceptors. Pyridoxal 5'-phosphate serves as cofactor.

The protein localises to the cytoplasm. It catalyses the reaction (sulfur carrier)-H + L-cysteine = (sulfur carrier)-SH + L-alanine. It participates in cofactor biosynthesis; iron-sulfur cluster biosynthesis. Master enzyme that delivers sulfur to a number of partners involved in Fe-S cluster assembly, tRNA modification or cofactor biosynthesis. Catalyzes the removal of elemental sulfur atoms from cysteine to produce alanine. Functions as a sulfur delivery protein for Fe-S cluster synthesis onto IscU, an Fe-S scaffold assembly protein, as well as other S acceptor proteins. In Helicobacter pylori (strain P12), this protein is Cysteine desulfurase IscS.